The chain runs to 312 residues: uncharacterized protein (312 aa).

2 disordered regions span residues 1-26 and 45-106; these read MQKDIGRRFQRNKKKINSKPGGAMVA and GNLQ…LPSG. The span at 8–17 shows a compositional bias: basic residues; that stretch reads RFQRNKKKIN. Over residues 68–77 the composition is skewed to basic and acidic residues; that stretch reads NGKRNGDKVR. Polar residues predominate over residues 85-103; sequence GHSSYAGSRISGGNSNSHL.

This is an uncharacterized protein from Schizosaccharomyces pombe (strain 972 / ATCC 24843) (Fission yeast).